The primary structure comprises 662 residues: F-box/WD repeat-containing protein pof10 (662 aa).

Positions 1-16 are enriched in polar residues; it reads MKSEPTSLDFTSSNLR. The disordered stretch occupies residues 1–27; sequence MKSEPTSLDFTSSNLRRMNRDHSSNNT. The F-box domain maps to 28-74; that stretch reads NRTVLNLPKEILIIIFSFLDPRSLLSAQCTCKYWKKLLSDDLSWRTA. 3 WD repeats span residues 215–260, 263–302, and 429–468; these read SHAD…SLQS, FRSS…GYAR, and TAYS…FLKK. A UIM 1 domain is found at 581–600; it reads SEEEIIAYVTMLSQEEEAKR. The tract at residues 617 to 645 is disordered; it reads ENDEQATSSLNALSSNHEPPQEQANVAEL. Residues 621 to 640 show a composition bias toward polar residues; the sequence is QATSSLNALSSNHEPPQEQA. In terms of domain architecture, UIM 2 spans 646-662; the sequence is NEQEQIELAMRLSLMEM.

In terms of assembly, part of a SCF (SKP1-cullin-F-box) protein ligase complex. Interacts with skp1.

It is found in the cytoplasm. Functionally, probably recognizes and binds to some phosphorylated proteins and promotes their ubiquitination and degradation. This Schizosaccharomyces pombe (strain 972 / ATCC 24843) (Fission yeast) protein is F-box/WD repeat-containing protein pof10 (pof10).